An 84-amino-acid chain; its full sequence is Small ribosomal subunit protein bS16 (84 aa).

It belongs to the bacterial ribosomal protein bS16 family.

This chain is Small ribosomal subunit protein bS16, found in Cupriavidus necator (strain ATCC 17699 / DSM 428 / KCTC 22496 / NCIMB 10442 / H16 / Stanier 337) (Ralstonia eutropha).